We begin with the raw amino-acid sequence, 315 residues long: ATP synthase gamma chain (315 aa).

The protein belongs to the ATPase gamma chain family. F-type ATPases have 2 components, CF(1) - the catalytic core - and CF(0) - the membrane proton channel. CF(1) has five subunits: alpha(3), beta(3), gamma(1), delta(1), epsilon(1). CF(0) has three main subunits: a, b and c.

Its subcellular location is the cellular thylakoid membrane. In terms of biological role, produces ATP from ADP in the presence of a proton gradient across the membrane. The gamma chain is believed to be important in regulating ATPase activity and the flow of protons through the CF(0) complex. This chain is ATP synthase gamma chain, found in Synechococcus sp. (strain PCC 6716).